We begin with the raw amino-acid sequence, 217 residues long: Small ribosomal subunit protein uS3 (217 aa).

One can recognise a KH type-2 domain in the interval 40-110 (IRDLINKWFN…EVYINIHEVR (71 aa)).

The protein belongs to the universal ribosomal protein uS3 family. As to quaternary structure, part of the 30S ribosomal subunit. Forms a tight complex with proteins S10 and S14.

Its function is as follows. Binds the lower part of the 30S subunit head. Binds mRNA in the 70S ribosome, positioning it for translation. The chain is Small ribosomal subunit protein uS3 from Rickettsia prowazekii (strain Madrid E).